The primary structure comprises 319 residues: ATP-dependent 6-phosphofructokinase (319 aa).

Gly-11 provides a ligand contact to ATP. ADP is bound at residue 21-25 (RAVTR). ATP is bound by residues 72–73 (RY) and 102–105 (GDGS). Asp-103 contributes to the Mg(2+) binding site. Residue 125-127 (TID) participates in substrate binding. The Proton acceptor role is filled by Asp-127. ADP is bound at residue Arg-154. Residues Arg-162 and 169–171 (MGR) contribute to the substrate site. ADP is bound by residues 185-187 (GAD) and 213-215 (KDH). Residues Glu-222, Arg-243, and 249-252 (HMQR) each bind substrate.

It belongs to the phosphofructokinase type A (PFKA) family. ATP-dependent PFK group I subfamily. Prokaryotic clade 'B1' sub-subfamily. Homotetramer. Mg(2+) serves as cofactor.

The protein resides in the cytoplasm. It catalyses the reaction beta-D-fructose 6-phosphate + ATP = beta-D-fructose 1,6-bisphosphate + ADP + H(+). It participates in carbohydrate degradation; glycolysis; D-glyceraldehyde 3-phosphate and glycerone phosphate from D-glucose: step 3/4. With respect to regulation, allosterically activated by ADP and other diphosphonucleosides, and allosterically inhibited by phosphoenolpyruvate. The binding affinities for these effectors are decreased however, and therefore the allosteric effect becomes apparent only at high effector concentrations. Its function is as follows. Catalyzes the phosphorylation of D-fructose 6-phosphate to fructose 1,6-bisphosphate by ATP, the first committing step of glycolysis. The protein is ATP-dependent 6-phosphofructokinase of Lactobacillus delbrueckii subsp. bulgaricus.